We begin with the raw amino-acid sequence, 310 residues long: GTPase Era (310 aa).

The 168-residue stretch at 17-184 folds into the Era-type G domain; the sequence is HSGFVALIGA…LDYLAQALPA (168 aa). Residues 25–32 form a G1 region; that stretch reads GAPNAGKS. 25–32 is a binding site for GTP; it reads GAPNAGKS. The interval 51-55 is G2; sequence QTTRA. The segment at 72–75 is G3; sequence DTPG. GTP contacts are provided by residues 72–76 and 134–137; these read DTPGI and NKVD. A G4 region spans residues 134-137; it reads NKVD. The segment at 163–165 is G5; that stretch reads VSA. The KH type-2 domain occupies 215 to 292; sequence LHQELPYSSH…HLFLFVKVRE (78 aa).

This sequence belongs to the TRAFAC class TrmE-Era-EngA-EngB-Septin-like GTPase superfamily. Era GTPase family. In terms of assembly, monomer.

It is found in the cytoplasm. The protein localises to the cell inner membrane. Functionally, an essential GTPase that binds both GDP and GTP, with rapid nucleotide exchange. Plays a role in 16S rRNA processing and 30S ribosomal subunit biogenesis and possibly also in cell cycle regulation and energy metabolism. The protein is GTPase Era of Mesorhizobium japonicum (strain LMG 29417 / CECT 9101 / MAFF 303099) (Mesorhizobium loti (strain MAFF 303099)).